A 172-amino-acid polypeptide reads, in one-letter code: uncharacterized protein (172 aa).

This is an uncharacterized protein from Aquifex aeolicus (strain VF5).